We begin with the raw amino-acid sequence, 502 residues long: Tryptophan decarboxylase TDC1 (502 aa).

The span at M1 to Q18 shows a compositional bias: polar residues. Residues M1–P21 form a disordered region. Residue K319 is modified to N6-(pyridoxal phosphate)lysine.

Belongs to the group II decarboxylase family. It depends on pyridoxal 5'-phosphate as a cofactor. As to expression, highly expressed in apex. Expressed in young stem and bark tissues. Expressed at low levels in leaves, fruits and seeds.

It catalyses the reaction L-tryptophan + H(+) = tryptamine + CO2. Its function is as follows. Involved in the biosynthesis of tryptamine. Supplies tryptamine for the indole moiety of camptothecin (CPT), an anti-cancer monoterpene alkaloid. Represents a key step in monoterpene indole alkaloid biosynthesis. Is specific for tryptophan, and inactive against tyrosine, phenylalanine and 3,4-dihydroxyphenylalanine (dopa). This Camptotheca acuminata (Happy tree) protein is Tryptophan decarboxylase TDC1.